A 287-amino-acid chain; its full sequence is 4-diphosphocytidyl-2-C-methyl-D-erythritol kinase (287 aa).

The active site involves K14. Position 96-106 (96-106 (PWGAGLGGGSS)) interacts with ATP. Residue D138 is part of the active site.

Belongs to the GHMP kinase family. IspE subfamily.

It carries out the reaction 4-CDP-2-C-methyl-D-erythritol + ATP = 4-CDP-2-C-methyl-D-erythritol 2-phosphate + ADP + H(+). It functions in the pathway isoprenoid biosynthesis; isopentenyl diphosphate biosynthesis via DXP pathway; isopentenyl diphosphate from 1-deoxy-D-xylulose 5-phosphate: step 3/6. In terms of biological role, catalyzes the phosphorylation of the position 2 hydroxy group of 4-diphosphocytidyl-2C-methyl-D-erythritol. In Methylibium petroleiphilum (strain ATCC BAA-1232 / LMG 22953 / PM1), this protein is 4-diphosphocytidyl-2-C-methyl-D-erythritol kinase.